Reading from the N-terminus, the 409-residue chain is MKQLVERFLSYVSIDTQSNPSAPQCPSTEKQLNLANQLVIELKELKLADVSVDKNGYVMARLPSNVDYDVPAIGFVAHMDTAPDASGENVKPQIIKDYQGETITLGTSGEELNPTQFPDLKNLIGHDLITTDGTTLLGADNKAGIAEILTAIAILQANPEIPHGDICIGFTPDEEIGRGANLFDVEKFNAKWAYTIDGGPVGELEYENFNATSADVICHGVNVHPGTAKGKMINSMNIAAQFQLMMPTDETPEGTEGYEGFYHLKSMESGVAKTELGYIVRDFSREGMAERKAFMQQKVDELNEKLEKGRVELILTDSYFNMREMVEPHPHVIELAKQAMTACDVQPDIKPIRGGTDGARLSFMGLPCPNIFTGGYNFHGIHEFITINGMKQAVDVIVKIAELNALNNK.

H78 is a Zn(2+) binding site. The active site involves D80. Residue D140 coordinates Zn(2+). Residue E174 is the Proton acceptor of the active site. Zn(2+) contacts are provided by E175, D197, and H379.

The protein belongs to the peptidase M20B family. Zn(2+) serves as cofactor.

Its subcellular location is the cytoplasm. The catalysed reaction is Release of the N-terminal residue from a tripeptide.. Its function is as follows. Cleaves the N-terminal amino acid of tripeptides. The polypeptide is Peptidase T (Aliivibrio salmonicida (strain LFI1238) (Vibrio salmonicida (strain LFI1238))).